A 317-amino-acid polypeptide reads, in one-letter code: Protoheme IX farnesyltransferase (317 aa).

Transmembrane regions (helical) follow at residues 33 to 53 (VMSL…GEIN), 54 to 74 (PILG…SGAL), 117 to 137 (VILG…TIFF), 154 to 174 (IVIG…CVTG), 181 to 201 (VILF…LALF), 242 to 262 (FFTG…SAIF), and 285 to 305 (MFAY…ADHF).

Belongs to the UbiA prenyltransferase family. Protoheme IX farnesyltransferase subfamily.

Its subcellular location is the cell inner membrane. The catalysed reaction is heme b + (2E,6E)-farnesyl diphosphate + H2O = Fe(II)-heme o + diphosphate. The protein operates within porphyrin-containing compound metabolism; heme O biosynthesis; heme O from protoheme: step 1/1. In terms of biological role, converts heme B (protoheme IX) to heme O by substitution of the vinyl group on carbon 2 of heme B porphyrin ring with a hydroxyethyl farnesyl side group. This Agrobacterium fabrum (strain C58 / ATCC 33970) (Agrobacterium tumefaciens (strain C58)) protein is Protoheme IX farnesyltransferase.